Consider the following 314-residue polypeptide: Small glutamine-rich tetratricopeptide repeat-containing protein alpha (314 aa).

Residues alanine 65–asparagine 99 form a disordered region. The segment covering methionine 71–proline 83 has biased composition (basic and acidic residues). Position 81 is a phosphothreonine (threonine 81). Serine 84 is subject to Phosphoserine. A compositionally biased stretch (basic and acidic residues) spans glutamate 90–asparagine 99. TPR repeat units lie at residues alanine 91–asparagine 124, alanine 125–tyrosine 158, and serine 159–asparagine 192. N6-acetyllysine is present on lysine 137. Residues glycine 249 to serine 268 are disordered. Serine 302 carries the phosphoserine modification. Residue threonine 304 is modified to Phosphothreonine. Serine 306 is subject to Phosphoserine.

The protein belongs to the SGT family. In terms of assembly, homodimer. Homooligomer. Interacts with DNAJC5 and DNAJC5B. Interacts (via TPR repeats) with HSP90AA1. Interacts (via Gln-rich region) with SLC2A1. Interacts with HSP90AB1. Interacts (via TPR repeats) with HSPA8/Hsc70; the interaction is direct. Interacts with BAG6 (via ubiquitin-like domain); interaction prevents interaction between BAG6 and RNF126. Forms a multiprotein complex, at least composed of DNAJB12, DNAJB14, HSPA8/Hsc70 and SGTA; interaction with DNAJB14 and HSPA8/Hsc70 is direct. As to quaternary structure, (Microbial infection) Interacts with NS1 from parvovirus H-1. In terms of tissue distribution, ubiquitously expressed.

Its subcellular location is the cytoplasm. It is found in the nucleus. Its function is as follows. Co-chaperone that binds misfolded and hydrophobic patches-containing client proteins in the cytosol. Mediates their targeting to the endoplasmic reticulum but also regulates their sorting to the proteasome when targeting fails. Functions in tail-anchored/type II transmembrane proteins membrane insertion constituting with ASNA1 and the BAG6 complex a targeting module. Functions upstream of the BAG6 complex and ASNA1, binding more rapidly the transmembrane domain of newly synthesized proteins. It is also involved in the regulation of the endoplasmic reticulum-associated misfolded protein catabolic process via its interaction with BAG6: collaborates with the BAG6 complex to maintain hydrophobic substrates in non-ubiquitinated states. Competes with RNF126 for interaction with BAG6, preventing the ubiquitination of client proteins associated with the BAG6 complex. Binds directly to HSC70 and HSP70 and regulates their ATPase activity. The sequence is that of Small glutamine-rich tetratricopeptide repeat-containing protein alpha (Sgta) from Rattus norvegicus (Rat).